Consider the following 220-residue polypeptide: uncharacterized protein (220 aa).

7 helical membrane passes run 6–26 (FSIL…LIVW), 33–53 (IVRL…LRGI), 59–79 (ALIA…PWLL), 103–123 (LLIT…VVNL), 126–146 (GVTI…LFVM), 157–177 (AGFL…TAGV), and 179–199 (LIVE…IGVL).

The protein localises to the cell membrane. This is an uncharacterized protein from Mycobacterium tuberculosis (strain ATCC 25618 / H37Rv).